The sequence spans 184 residues: UPF0215 protein MJ1150 (184 aa).

The protein belongs to the UPF0215 family.

This is UPF0215 protein MJ1150 from Methanocaldococcus jannaschii (strain ATCC 43067 / DSM 2661 / JAL-1 / JCM 10045 / NBRC 100440) (Methanococcus jannaschii).